We begin with the raw amino-acid sequence, 909 residues long: SCY1-like protein 2 B (909 aa).

In terms of domain architecture, Protein kinase spans 39-343 (YELLDQIGSA…ALDFTGSNFF (305 aa)). HEAT repeat units follow at residues 311–348 (SIPS…SDAR), 350–382 (RALR…DFDS), 383–401 (RVLR…RNLV), 402–439 (LQPI…TASG), 465–502 (VLPL…VVRQ), 499–537 (VVRQ…TLDK), and 578–617 (FTAE…KIEE). 2 disordered regions span residues 624–772 (NDSG…VAST) and 804–909 (SASL…LDLL). 5 stretches are compositionally biased toward polar residues: residues 638-648 (NGLQFQSSTQI), 678-712 (PASS…TAPT), 724-747 (RQSS…TSFA), 804-828 (SASL…QDPL), and 835-852 (KQSQ…NNQK).

This sequence belongs to the protein kinase superfamily. Interacts with VTI11, VTI12 and CHC1. Expressed in roots, seedlings, leaves, stems, flowers, and, at low levels, in siliques.

It localises to the golgi apparatus membrane. It is found in the golgi apparatus. Its subcellular location is the trans-Golgi network membrane. The protein resides in the prevacuolar compartment membrane. Probably inactive kinase. Component of the AP2-containing clathrin coat that regulates clathrin-dependent trafficking at plasma membrane, TGN and endosomal system. Together with SCYL2B, required for cell growth, plant growth and development. Essential for polarized root hair development probably by mediating the root hair tip localization of cellulose synthase-like D3 (CSLD3). The chain is SCY1-like protein 2 B from Arabidopsis thaliana (Mouse-ear cress).